Here is a 195-residue protein sequence, read N- to C-terminus: Imidazoleglycerol-phosphate dehydratase (195 aa).

Belongs to the imidazoleglycerol-phosphate dehydratase family.

It localises to the cytoplasm. It catalyses the reaction D-erythro-1-(imidazol-4-yl)glycerol 3-phosphate = 3-(imidazol-4-yl)-2-oxopropyl phosphate + H2O. It functions in the pathway amino-acid biosynthesis; L-histidine biosynthesis; L-histidine from 5-phospho-alpha-D-ribose 1-diphosphate: step 6/9. In Cupriavidus pinatubonensis (strain JMP 134 / LMG 1197) (Cupriavidus necator (strain JMP 134)), this protein is Imidazoleglycerol-phosphate dehydratase.